A 172-amino-acid chain; its full sequence is uncharacterized protein (172 aa).

Residues 1–148 (MANSQKVIDV…TIHDFFENGN (148 aa)) form the Ferritin-like diiron domain.

This is an uncharacterized protein from Ureaplasma urealyticum (Ureaplasma urealyticum biotype 2).